The following is a 465-amino-acid chain: Transcriptional protein swt1 (465 aa).

A PINc domain is found at Gly70–Ile190.

Belongs to the SWT1 family.

It localises to the cytoplasm. The protein localises to the nucleus. Its function is as follows. Involved in transcription. In Schizosaccharomyces pombe (strain 972 / ATCC 24843) (Fission yeast), this protein is Transcriptional protein swt1.